A 157-amino-acid chain; its full sequence is Small ribosomal subunit protein bS16 (157 aa).

Residues 125–141 are compositionally biased toward basic and acidic residues; sequence KRKAAKKAAEEAAAKEA. Residues 125–157 are disordered; sequence KRKAAKKAAEEAAAKEAEAEEAAEDKAEEESAE. Over residues 142 to 157 the composition is skewed to acidic residues; sequence EAEEAAEDKAEEESAE.

The protein belongs to the bacterial ribosomal protein bS16 family.

This Corynebacterium kroppenstedtii (strain DSM 44385 / JCM 11950 / CIP 105744 / CCUG 35717) protein is Small ribosomal subunit protein bS16.